The sequence spans 351 residues: Phosphoribosylformylglycinamidine cyclo-ligase (351 aa).

This sequence belongs to the AIR synthase family.

It localises to the cytoplasm. The enzyme catalyses 2-formamido-N(1)-(5-O-phospho-beta-D-ribosyl)acetamidine + ATP = 5-amino-1-(5-phospho-beta-D-ribosyl)imidazole + ADP + phosphate + H(+). Its pathway is purine metabolism; IMP biosynthesis via de novo pathway; 5-amino-1-(5-phospho-D-ribosyl)imidazole from N(2)-formyl-N(1)-(5-phospho-D-ribosyl)glycinamide: step 2/2. In Burkholderia pseudomallei (strain 1710b), this protein is Phosphoribosylformylglycinamidine cyclo-ligase.